Consider the following 309-residue polypeptide: Aspartate carbamoyltransferase catalytic subunit (309 aa).

Carbamoyl phosphate contacts are provided by Arg-58 and Thr-59. Lys-86 lines the L-aspartate pocket. Arg-108, His-136, and Gln-139 together coordinate carbamoyl phosphate. L-aspartate is bound by residues Arg-169 and Arg-223. Positions 265 and 266 each coordinate carbamoyl phosphate.

It belongs to the aspartate/ornithine carbamoyltransferase superfamily. ATCase family. In terms of assembly, heterododecamer (2C3:3R2) of six catalytic PyrB chains organized as two trimers (C3), and six regulatory PyrI chains organized as three dimers (R2).

The catalysed reaction is carbamoyl phosphate + L-aspartate = N-carbamoyl-L-aspartate + phosphate + H(+). It functions in the pathway pyrimidine metabolism; UMP biosynthesis via de novo pathway; (S)-dihydroorotate from bicarbonate: step 2/3. Functionally, catalyzes the condensation of carbamoyl phosphate and aspartate to form carbamoyl aspartate and inorganic phosphate, the committed step in the de novo pyrimidine nucleotide biosynthesis pathway. The polypeptide is Aspartate carbamoyltransferase catalytic subunit (Akkermansia muciniphila (strain ATCC BAA-835 / DSM 22959 / JCM 33894 / BCRC 81048 / CCUG 64013 / CIP 107961 / Muc)).